Here is a 340-residue protein sequence, read N- to C-terminus: DNA-directed RNA polymerase subunit alpha (340 aa).

Positions 1–236 are alpha N-terminal domain (alpha-NTD); the sequence is MLSLSKNWNT…EQLQLFISFE (236 aa). An alpha C-terminal domain (alpha-CTD) region spans residues 246 to 340; it reads TDALPFSPYL…LSNRYEDSYN (95 aa).

It belongs to the RNA polymerase alpha chain family. As to quaternary structure, homodimer. The RNAP catalytic core consists of 2 alpha, 1 beta, 1 beta' and 1 omega subunit. When a sigma factor is associated with the core the holoenzyme is formed, which can initiate transcription.

It catalyses the reaction RNA(n) + a ribonucleoside 5'-triphosphate = RNA(n+1) + diphosphate. Functionally, DNA-dependent RNA polymerase catalyzes the transcription of DNA into RNA using the four ribonucleoside triphosphates as substrates. The protein is DNA-directed RNA polymerase subunit alpha of Rickettsia felis (strain ATCC VR-1525 / URRWXCal2) (Rickettsia azadi).